The primary structure comprises 357 residues: 3-isopropylmalate dehydrogenase (357 aa).

77 to 90 is a binding site for NAD(+); sequence GPKWDNLEGSKRPE. 4 residues coordinate substrate: arginine 97, arginine 107, arginine 136, and aspartate 224. Aspartate 224, aspartate 248, and aspartate 252 together coordinate Mg(2+). 282–294 is an NAD(+) binding site; the sequence is GSAPDIAGLDIAN.

Belongs to the isocitrate and isopropylmalate dehydrogenases family. LeuB type 1 subfamily. In terms of assembly, homodimer. Mg(2+) is required as a cofactor. The cofactor is Mn(2+).

The protein resides in the cytoplasm. The enzyme catalyses (2R,3S)-3-isopropylmalate + NAD(+) = 4-methyl-2-oxopentanoate + CO2 + NADH. It functions in the pathway amino-acid biosynthesis; L-leucine biosynthesis; L-leucine from 3-methyl-2-oxobutanoate: step 3/4. In terms of biological role, catalyzes the oxidation of 3-carboxy-2-hydroxy-4-methylpentanoate (3-isopropylmalate) to 3-carboxy-4-methyl-2-oxopentanoate. The product decarboxylates to 4-methyl-2 oxopentanoate. The chain is 3-isopropylmalate dehydrogenase (leuB) from Clostridium pasteurianum.